A 265-amino-acid polypeptide reads, in one-letter code: DNA repair protein RecO (265 aa).

The protein belongs to the RecO family.

Functionally, involved in DNA repair and RecF pathway recombination. The chain is DNA repair protein RecO from Mycobacterium marinum (strain ATCC BAA-535 / M).